Here is a 327-residue protein sequence, read N- to C-terminus: Zinc transport protein ZntB (327 aa).

Topologically, residues 1–273 (MEAIKGSEVN…SRRSYTMSLM (273 aa)) are cytoplasmic. Residues 274-294 (AMVFLPSTFLTGLFGVNLGGI) traverse the membrane as a helical segment. Over 295-300 (PGGGWH) the chain is Periplasmic. A helical membrane pass occupies residues 301–321 (LGFSVFCVALVLLIGGVTWWL). Residues 322 to 327 (HRSKWL) are Cytoplasmic-facing.

The protein belongs to the CorA metal ion transporter (MIT) (TC 1.A.35) family.

Its subcellular location is the cell inner membrane. It catalyses the reaction Zn(2+)(out) + H(+)(out) = Zn(2+)(in) + H(+)(in). Zinc transporter. Acts as a Zn(2+):proton symporter, which likely mediates zinc ion uptake. This Cronobacter sakazakii (strain ATCC BAA-894) (Enterobacter sakazakii) protein is Zinc transport protein ZntB.